We begin with the raw amino-acid sequence, 367 residues long: MSPTTPRSVEPSGLKPEQLPPSYFTWPGLLGRLGNGQELSEAQVRWAMNEIMEGNATDAQIAAFAFGIRVRGITAAELAAAAETMTSFATPVDFSDVPNCVDIVGTGGDGHHTVNISTMASFVVSAAGVPVVKHGNRAASSKCGGADMLEALGLDIERSPEDIRQDAHDTGFAFMFAKTYHPAMRFAGPVRSQLGAPTIFNLLGPMTNPAYPKFGLIGCAFKEFMPIMGGAFARQGSRVLVVRGMDGMDEISVCTPTEVVTVDAAGRTGEEVINPRNVGLDFYEDGSLVGGDAEYNADVAVRLMKGEISGAIKDAVLINAAGALTAVRGWEENGFQETLREQVQIAREALESGAALKQMEKIVGKEF.

Residues glycine 105, 108–109 (GD), threonine 113, 115–118 (NIST), 133–141 (KHGNRAASS), and glycine 145 contribute to the 5-phospho-alpha-D-ribose 1-diphosphate site. Glycine 105 provides a ligand contact to anthranilate. Serine 117 provides a ligand contact to Mg(2+). Asparagine 136 contacts anthranilate. Arginine 191 is a binding site for anthranilate. The Mg(2+) site is built by aspartate 249 and glutamate 250.

This sequence belongs to the anthranilate phosphoribosyltransferase family. As to quaternary structure, homodimer. The cofactor is Mg(2+).

It catalyses the reaction N-(5-phospho-beta-D-ribosyl)anthranilate + diphosphate = 5-phospho-alpha-D-ribose 1-diphosphate + anthranilate. It functions in the pathway amino-acid biosynthesis; L-tryptophan biosynthesis; L-tryptophan from chorismate: step 2/5. Catalyzes the transfer of the phosphoribosyl group of 5-phosphorylribose-1-pyrophosphate (PRPP) to anthranilate to yield N-(5'-phosphoribosyl)-anthranilate (PRA). In Corynebacterium jeikeium (strain K411), this protein is Anthranilate phosphoribosyltransferase.